The sequence spans 397 residues: Transaldolase (397 aa).

The Schiff-base intermediate with substrate role is filled by K136.

It belongs to the transaldolase family. Type 1 subfamily. As to quaternary structure, homodimer.

The protein localises to the cytoplasm. It carries out the reaction D-sedoheptulose 7-phosphate + D-glyceraldehyde 3-phosphate = D-erythrose 4-phosphate + beta-D-fructose 6-phosphate. Its pathway is carbohydrate degradation; pentose phosphate pathway; D-glyceraldehyde 3-phosphate and beta-D-fructose 6-phosphate from D-ribose 5-phosphate and D-xylulose 5-phosphate (non-oxidative stage): step 2/3. Transaldolase is important for the balance of metabolites in the pentose-phosphate pathway. This Synechococcus sp. (strain ATCC 27144 / PCC 6301 / SAUG 1402/1) (Anacystis nidulans) protein is Transaldolase.